The following is a 130-amino-acid chain: Methylglyoxal synthase (130 aa).

One can recognise an MGS-like domain in the interval 1–130 (MSKPRIALIA…DLARNMQDVC (130 aa)). Residues H11, K15, 37-40 (TGTT), and 57-58 (SG) each bind substrate. The Proton donor/acceptor role is filled by D63. H90 contributes to the substrate binding site.

This sequence belongs to the methylglyoxal synthase family.

It carries out the reaction dihydroxyacetone phosphate = methylglyoxal + phosphate. Catalyzes the formation of methylglyoxal from dihydroxyacetone phosphate. The polypeptide is Methylglyoxal synthase (Burkholderia cenocepacia (strain HI2424)).